Consider the following 165-residue polypeptide: MSHPALTQLRALRYFDAIPALEPHLLDWLLLEDSMTKRFEQLGKRVSVTLIREAFVGQSEVEEASGLLPSESRYWLREILLCADGEPWLAGRTVVPESTLCGPEQVLQHLGKTPLGRYLFTSSTLTRDFIEIGRDATLWGRRSRLRLSGKPLLLTELFLPASPLY.

Residues M35, R77, L115, and E156 each coordinate substrate.

Belongs to the UbiC family. Monomer.

It is found in the cytoplasm. The catalysed reaction is chorismate = 4-hydroxybenzoate + pyruvate. The protein operates within cofactor biosynthesis; ubiquinone biosynthesis. Removes the pyruvyl group from chorismate, with concomitant aromatization of the ring, to provide 4-hydroxybenzoate (4HB) for the ubiquinone pathway. This is Chorismate pyruvate-lyase from Salmonella schwarzengrund (strain CVM19633).